Here is a 178-residue protein sequence, read N- to C-terminus: Colicin-A immunity protein (178 aa).

Residues 1–13 (MMNEHSIDTDNRK) lie on the Cytoplasmic side of the membrane. Residues 14–37 (ANNALYLFIIIGLIPLLCIFVVYY) form a helical membrane-spanning segment. Residues 38 to 68 (KTPDALLLRKIATSTENLPSITSSYNPLMTK) are Periplasmic-facing. A helical transmembrane segment spans residues 69–89 (VMDIYCKTAPFLALILYILTF). The Cytoplasmic portion of the chain corresponds to 90 to 105 (KIRKLINNTDRNTVLR). The chain crosses the membrane as a helical span at residues 106–123 (SCLLSPLVYAAIVYLFCF). Residues 124–142 (RNFELTTAGRPVRLMATND) are Periplasmic-facing. A helical transmembrane segment spans residues 143 to 165 (ATLLLFYIGLYSIIFFTTYITLF). At 166-178 (TPVTAFKLLKKRQ) the chain is on the cytoplasmic side.

It is found in the cell inner membrane. In terms of biological role, this protein is able to protect a cell, which harbors the plasmid ColA encoding colicin A, against colicin A. This chain is Colicin-A immunity protein (cai), found in Citrobacter freundii.